Here is a 279-residue protein sequence, read N- to C-terminus: Acyl-[acyl-carrier-protein]--UDP-N-acetylglucosamine O-acyltransferase (279 aa).

The tract at residues 256 to 279 is disordered; the sequence is IERGADKDALQDESVEKEGALVES.

Belongs to the transferase hexapeptide repeat family. LpxA subfamily. Homotrimer.

It localises to the cytoplasm. The enzyme catalyses a (3R)-hydroxyacyl-[ACP] + UDP-N-acetyl-alpha-D-glucosamine = a UDP-3-O-[(3R)-3-hydroxyacyl]-N-acetyl-alpha-D-glucosamine + holo-[ACP]. It participates in glycolipid biosynthesis; lipid IV(A) biosynthesis; lipid IV(A) from (3R)-3-hydroxytetradecanoyl-[acyl-carrier-protein] and UDP-N-acetyl-alpha-D-glucosamine: step 1/6. Involved in the biosynthesis of lipid A, a phosphorylated glycolipid that anchors the lipopolysaccharide to the outer membrane of the cell. This Chlamydia caviae (strain ATCC VR-813 / DSM 19441 / 03DC25 / GPIC) (Chlamydophila caviae) protein is Acyl-[acyl-carrier-protein]--UDP-N-acetylglucosamine O-acyltransferase.